The primary structure comprises 478 residues: 7-dehydrocholesterol reductase (478 aa).

The segment at 1–28 is disordered; that stretch reads MMASDRVRKRHKGSANGAQTVEKEPSKE. Transmembrane regions (helical) follow at residues 43–63, 97–117, 180–200, 269–289, 309–329, and 333–353; these read LSGV…FIMA, WAAA…YMCV, WIPL…FAFI, VTNS…DFFW, LGWG…LYLV, and IQLS…GYYI. NADP(+) contacts are provided by residues lysine 361, arginine 365, methionine 398, tryptophan 403, and 410–411; that span reads NY. The chain crosses the membrane as a helical span at residues 424 to 444; that stretch reads ACGGNHLLPYFYIIYMTILLV. NADP(+) contacts are provided by residues aspartate 450, 454 to 458, and tyrosine 465; that span reads CSNKY.

This sequence belongs to the ERG4/ERG24 family.

The protein resides in the endoplasmic reticulum membrane. It catalyses the reaction cholesterol + NADP(+) = 7-dehydrocholesterol + NADPH + H(+). The enzyme catalyses 7-dehydrodesmosterol + NADPH + H(+) = desmosterol + NADP(+). It participates in steroid biosynthesis; cholesterol biosynthesis. Catalyzes the last step of the cholesterol synthesis pathway, which transforms cholesta-5,7-dien-3beta-ol (7-dehydrocholesterol,7-DHC) into cholesterol by reducing the C7-C8 double bond of its sterol core. Can also metabolize cholesta-5,7,24-trien-3beta-ol (7-dehydrodemosterol, 7-DHD) to desmosterol, which is then metabolized by the Delta(24)-sterol reductase (DHCR24) to cholesterol. Modulates ferroptosis (a form of regulated cell death driven by iron-dependent lipid peroxidation) through the metabolic breakdown of the anti-ferroptotic metabolites 7-DHC and 7-DHD which, when accumulated, divert the propagation of peroxyl radical-mediated damage from phospholipid components to its sterol core, protecting plasma and mitochondrial membranes from phospholipid autoxidation. The sequence is that of 7-dehydrocholesterol reductase (dhcr7) from Danio rerio (Zebrafish).